Here is a 217-residue protein sequence, read N- to C-terminus: Small ribosomal subunit protein uS3 (217 aa).

The 69-residue stretch at 38–106 (IRKFIDNELK…KVHINVIEIK (69 aa)) folds into the KH type-2 domain.

The protein belongs to the universal ribosomal protein uS3 family. As to quaternary structure, part of the 30S ribosomal subunit. Forms a tight complex with proteins S10 and S14.

Functionally, binds the lower part of the 30S subunit head. Binds mRNA in the 70S ribosome, positioning it for translation. The sequence is that of Small ribosomal subunit protein uS3 (rpsC) from Staphylococcus aureus (strain COL).